The chain runs to 62 residues: Protein A37.5 homolog (62 aa).

Belongs to the orthopoxviruses A37.5 protein family.

The sequence is that of Protein A37.5 homolog (A40_5R) from Homo sapiens (Human).